A 463-amino-acid polypeptide reads, in one-letter code: ATP-dependent protease ATPase subunit HslU (463 aa).

Residues isoleucine 19 and 61–66 (GVGKTE) each bind ATP. Residues 154–174 (FGGAQNSSQTSDTQEDGEIEK) form a disordered region. ATP contacts are provided by aspartate 277, glutamate 341, and arginine 413.

This sequence belongs to the ClpX chaperone family. HslU subfamily. As to quaternary structure, a double ring-shaped homohexamer of HslV is capped on each side by a ring-shaped HslU homohexamer. The assembly of the HslU/HslV complex is dependent on binding of ATP.

The protein localises to the cytoplasm. In terms of biological role, ATPase subunit of a proteasome-like degradation complex; this subunit has chaperone activity. The binding of ATP and its subsequent hydrolysis by HslU are essential for unfolding of protein substrates subsequently hydrolyzed by HslV. HslU recognizes the N-terminal part of its protein substrates and unfolds these before they are guided to HslV for hydrolysis. In Bacillus cereus (strain G9842), this protein is ATP-dependent protease ATPase subunit HslU.